The sequence spans 249 residues: Chitooligosaccharide deacetylase (249 aa).

The Mg(2+) site is built by His61 and His125.

This sequence belongs to the YdjC deacetylase family. ChbG subfamily. Homodimer. Requires Mg(2+) as cofactor.

The protein resides in the cytoplasm. The enzyme catalyses N,N'-diacetylchitobiose + H2O = N-acetyl-beta-D-glucosaminyl-(1-&gt;4)-D-glucosamine + acetate. It carries out the reaction diacetylchitobiose-6'-phosphate + H2O = N'-monoacetylchitobiose-6'-phosphate + acetate. It participates in glycan degradation; chitin degradation. Involved in the degradation of chitin. ChbG is essential for growth on the acetylated chitooligosaccharides chitobiose and chitotriose but is dispensable for growth on cellobiose and chitosan dimer, the deacetylated form of chitobiose. Deacetylation of chitobiose-6-P and chitotriose-6-P is necessary for both the activation of the chb promoter by the regulatory protein ChbR and the hydrolysis of phosphorylated beta-glucosides by the phospho-beta-glucosidase ChbF. Catalyzes the removal of only one acetyl group from chitobiose-6-P to yield monoacetylchitobiose-6-P, the inducer of ChbR and the substrate of ChbF. The sequence is that of Chitooligosaccharide deacetylase from Escherichia coli O9:H4 (strain HS).